The sequence spans 466 residues: Muscarinic acetylcholine receptor M2 (466 aa).

At 1–22 (MNNSTNSSNSGLALTSPYKTFE) the chain is on the extracellular side. N-linked (GlcNAc...) asparagine glycans are attached at residues Asn2, Asn3, and Asn6. Residues 23 to 45 (VVFIVLVAGSLSLVTIIGNILVM) form a helical membrane-spanning segment. Residues 46-59 (VSIKVNRHLQTVNN) lie on the Cytoplasmic side of the membrane. A helical transmembrane segment spans residues 60-80 (YFLFSLACADLIIGVFSMNLY). Residues 81-97 (TLYTVIGYWPLGPVVCD) lie on the Extracellular side of the membrane. Cys96 and Cys176 are joined by a disulfide. Residues 98–119 (LWLALDYVVSNASVMNLLIISF) traverse the membrane as a helical segment. The short motif at 120 to 122 (DRY) is the Important for signaling element. The Cytoplasmic portion of the chain corresponds to 120 to 139 (DRYFCVTKPLTYPVKRTTKM). The helical transmembrane segment at 140–162 (AGMMIAAAWVLSFILWAPAILFW) threads the bilayer. At 163–184 (QFIVGVRTVEDGECYIQFFSNA) the chain is on the extracellular side. A helical transmembrane segment spans residues 185-209 (AVTFGTAIAAFYLPVIIMTVLYWHI). Topologically, residues 210-387 (SRASKSRIKK…PPSREKKVTR (178 aa)) are cytoplasmic. The interval 218–320 (KKDKKEPVAN…SLGHSKDENS (103 aa)) is disordered. Ser232 carries the post-translational modification Phosphoserine. Basic and acidic residues predominate over residues 254–270 (ALEHNKIQNGKAPRDAV). Polar residues-rich tracts occupy residues 284-293 (NDSTSVSAVA) and 304-313 (DENTVSTSLG). A helical transmembrane segment spans residues 388-410 (TILAILLAFIITWAPYNVMVLIN). Residues 411 to 418 (TFCAPCIP) lie on the Extracellular side of the membrane. An intrachain disulfide couples Cys413 to Cys416. The chain crosses the membrane as a helical span at residues 419–442 (NTVWTIGYWLCYINSTINPACYAL). The short motif at 436–440 (NPACY) is the Important for signaling element. Residues 443–466 (CNATFKKTFKHLLMCHYKNIGATR) are Cytoplasmic-facing. Phosphothreonine occurs at positions 446, 450, and 465.

This sequence belongs to the G-protein coupled receptor 1 family. Muscarinic acetylcholine receptor subfamily. CHRM2 sub-subfamily. In terms of assembly, interacts with ARRB1 and ARRB2. Interacts with RACK1; the interaction regulates CHRM2 internalization. In terms of processing, phosphorylated in response to agonist treatment.

It localises to the cell membrane. The protein localises to the postsynaptic cell membrane. Its function is as follows. The muscarinic acetylcholine receptor mediates various cellular responses, including inhibition of adenylate cyclase, breakdown of phosphoinositides and modulation of potassium channels through the action of G proteins. Primary transducing effect is adenylate cyclase inhibition. The protein is Muscarinic acetylcholine receptor M2 (CHRM2) of Sus scrofa (Pig).